The following is a 106-amino-acid chain: Large ribosomal subunit protein bL21 (106 aa).

This sequence belongs to the bacterial ribosomal protein bL21 family. As to quaternary structure, part of the 50S ribosomal subunit. Contacts protein L20.

This protein binds to 23S rRNA in the presence of protein L20. The chain is Large ribosomal subunit protein bL21 from Fervidobacterium nodosum (strain ATCC 35602 / DSM 5306 / Rt17-B1).